Reading from the N-terminus, the 333-residue chain is Torsin-1A (333 aa).

A signal peptide spans 1–20 (MKLGRATLALLLLVPCVVRA). The segment at 92–252 (KPKKPLTLSL…VSVFNNKNSG (161 aa)) is interaction with SNAPIN. Asn144 and Asn159 each carry an N-linked (GlcNAc...) asparagine glycan. The interval 252–333 (GFWHSSLIDR…FTKLDYYLDD (82 aa)) is interaction with KLC1. The segment at 313–333 (KVFSDKGCKTVFTKLDYYLDD) is interaction with SYNE3.

The protein belongs to the ClpA/ClpB family. Torsin subfamily. As to quaternary structure, homohexamer. Interacts with TOR1B; the interaction may be specific of neural tissues. Interacts (ATP-bound) with TOR1AIP1 and TOR1AIP2; the interactions induce ATPase activity. Interacts with KLHL14; preferentially when ATP-free. Interacts with KLC1 (via TPR repeats); the interaction associates TOR1A with the kinesin oligomeric complex. Interacts with COPS4; the interaction associates TOR1A with the CSN complex. Interacts with SNAPIN; the interaction is direct and associates SNAPIN with the CSN complex. Interacts with STON2. Interacts (ATP-bound) with SYNE3 (via KASH domain); the interaction is required for SYNE3 nuclear envelope localization. Interacts with VIM; the interaction associates TOR1A with the cytoskeleton. Interacts with PLEC. Interacts (ATP-bound) with SLC6A3; regulates SLC6A3 transport to the plasma membrane. N-glycosylated. Expressed in brain (at protein level).

It localises to the endoplasmic reticulum lumen. The protein localises to the nucleus inner membrane. Its subcellular location is the cell projection. It is found in the growth cone. The protein resides in the cytoplasmic vesicle membrane. It localises to the cytoplasmic vesicle. The protein localises to the secretory vesicle. Its subcellular location is the synaptic vesicle. It catalyses the reaction ATP + H2O = ADP + phosphate + H(+). Functionally, protein with chaperone functions important for the control of protein folding, processing, stability and localization as well as for the reduction of misfolded protein aggregates. Involved in the regulation of synaptic vesicle recycling, controls STON2 protein stability in collaboration with the COP9 signalosome complex (CSN). In the nucleus, may link the cytoskeleton with the nuclear envelope, this mechanism seems to be crucial for the control of nuclear polarity, cell movement and, specifically in neurons, nuclear envelope integrity. Participates in the cellular trafficking and may regulate the subcellular location of multipass membrane proteins such as the dopamine transporter SLC6A3, leading to the modulation of dopamine neurotransmission. In the endoplasmic reticulum, plays a role in the quality control of protein folding by increasing clearance of misfolded proteins such as SGCE variants or holding them in an intermediate state for proper refolding. May have a redundant function with TOR1B in non-neural tissues. In Rattus norvegicus (Rat), this protein is Torsin-1A (Tor1a).